The chain runs to 1217 residues: ATP-dependent helicase/nuclease subunit A (1217 aa).

The region spanning 10-475 is the UvrD-like helicase ATP-binding domain; that stretch reads VIWTDAQWQS…IDLSQNFRSR (466 aa). ATP is bound at residue 31 to 38; that stretch reads AAAGSGKT. In terms of domain architecture, UvrD-like helicase C-terminal spans 476 to 786; sequence KEVLSTTNYI…RMMTIHSSKG (311 aa).

Belongs to the helicase family. AddA subfamily. In terms of assembly, heterodimer of AddA and AddB/RexB. Mg(2+) is required as a cofactor.

The enzyme catalyses Couples ATP hydrolysis with the unwinding of duplex DNA by translocating in the 3'-5' direction.. It catalyses the reaction ATP + H2O = ADP + phosphate + H(+). Functionally, the heterodimer acts as both an ATP-dependent DNA helicase and an ATP-dependent, dual-direction single-stranded exonuclease. Recognizes the chi site generating a DNA molecule suitable for the initiation of homologous recombination. The AddA nuclease domain is required for chi fragment generation; this subunit has the helicase and 3' -&gt; 5' nuclease activities. The sequence is that of ATP-dependent helicase/nuclease subunit A from Staphylococcus aureus (strain Mu3 / ATCC 700698).